The chain runs to 130 residues: Trypsin inhibitor (130 aa).

The disordered stretch occupies residues 27–49; the sequence is LHKQARQSGSGPSPQGPQQRPPL. Positions 32–49 are enriched in low complexity; that stretch reads RQSGSGPSPQGPQQRPPL.

Belongs to the 2S seed storage albumins family. As to quaternary structure, the protein consists of two chains linked by disulfide bonds.

In terms of biological role, inhibits trypsin with a Ki of 7 x 10(-6) M. This chain is Trypsin inhibitor, found in Mutarda arvensis (Charlock mustard).